Consider the following 258-residue polypeptide: Synapse differentiation-inducing gene protein 1 (258 aa).

Residues 1 to 181 (MDGIIEQKSM…NFLMMPPRDH (181 aa)) lie on the Cytoplasmic side of the membrane. Ser-137 is modified (phosphoserine). The helical transmembrane segment at 182–202 (LGLSVFSMLCCFWPLGIAAFY) threads the bilayer. Residues 203 to 228 (LSHETNKAVAKGDLHQASTSSRRALF) are Extracellular-facing. The segment at residues 229–249 (LAVLSITIGTGVYVGVAVALI) is an intramembrane region (helical). Topologically, residues 250–258 (AYLSKNNHL) are extracellular.

It belongs to the CD225/Dispanin family. As to quaternary structure, homodimer. Interacts with GRIA1 and GRIA2.

The protein localises to the cell membrane. It is found in the early endosome membrane. It localises to the postsynaptic density membrane. The protein resides in the synapse. Its subcellular location is the cell projection. The protein localises to the dendrite. It is found in the dendritic spine. Its function is as follows. May regulate AMPA receptor content at nascent synapses, and have a role in postsynaptic development and maturation. This is Synapse differentiation-inducing gene protein 1 (SYNDIG1) from Homo sapiens (Human).